Reading from the N-terminus, the 225-residue chain is ATP-dependent Clp protease proteolytic subunit (225 aa).

Ser101 acts as the Nucleophile in catalysis. His126 is an active-site residue.

This sequence belongs to the peptidase S14 family. In terms of assembly, component of the chloroplastic Clp protease core complex.

It localises to the plastid. It is found in the chloroplast stroma. It catalyses the reaction Hydrolysis of proteins to small peptides in the presence of ATP and magnesium. alpha-casein is the usual test substrate. In the absence of ATP, only oligopeptides shorter than five residues are hydrolyzed (such as succinyl-Leu-Tyr-|-NHMec, and Leu-Tyr-Leu-|-Tyr-Trp, in which cleavage of the -Tyr-|-Leu- and -Tyr-|-Trp bonds also occurs).. Functionally, cleaves peptides in various proteins in a process that requires ATP hydrolysis. Has a chymotrypsin-like activity. Plays a major role in the degradation of misfolded proteins. The protein is ATP-dependent Clp protease proteolytic subunit of Chlorokybus atmophyticus (Soil alga).